A 36-amino-acid polypeptide reads, in one-letter code: U4-ctenitoxin-Pr1a (36 aa).

3 disulfides stabilise this stretch: cysteine 3/cysteine 17, cysteine 10/cysteine 22, and cysteine 16/cysteine 34.

As to expression, expressed by the venom gland.

Its subcellular location is the secreted. Neurotoxin. Causes spastic paralysis and death in mice. Moderate inhibitor of L-type calcium channels (Cav1/CACNA1). The protein is U4-ctenitoxin-Pr1a of Phoneutria reidyi (Brazilian Amazonian armed spider).